The chain runs to 274 residues: Glucosamine-6-phosphate deaminase (274 aa).

D72 (proton acceptor; for enolization step) is an active-site residue. D141 (for ring-opening step) is an active-site residue. H143 (proton acceptor; for ring-opening step) is an active-site residue. The active-site For ring-opening step is E148.

It belongs to the glucosamine/galactosamine-6-phosphate isomerase family. In terms of assembly, homohexamer.

Its subcellular location is the cytoplasm. The catalysed reaction is alpha-D-glucosamine 6-phosphate + H2O = beta-D-fructose 6-phosphate + NH4(+). It participates in nucleotide-sugar biosynthesis; UDP-N-acetyl-alpha-D-glucosamine biosynthesis; alpha-D-glucosamine 6-phosphate from D-fructose 6-phosphate: step 1/1. In terms of biological role, catalyzes the reversible conversion of alpha-D-glucosamine 6-phosphate (GlcN-6P) into beta-D-fructose 6-phosphate (Fru-6P) and ammonium ion, a regulatory reaction step in de novo uridine diphosphate-N-acetyl-alpha-D-glucosamine (UDP-GlcNAc) biosynthesis via hexosamine pathway. This Drosophila pseudoobscura pseudoobscura (Fruit fly) protein is Glucosamine-6-phosphate deaminase.